The following is a 328-amino-acid chain: Fructose-1,6-bisphosphatase class 1 (328 aa).

Residues E89, D110, L112, and D113 each contribute to the Mg(2+) site. Substrate is bound by residues N206, Y234, 252-254 (YLY), and K264. A Mg(2+)-binding site is contributed by E270.

Belongs to the FBPase class 1 family. Homotetramer. The cofactor is Mg(2+).

It localises to the cytoplasm. The catalysed reaction is beta-D-fructose 1,6-bisphosphate + H2O = beta-D-fructose 6-phosphate + phosphate. Its pathway is carbohydrate biosynthesis; gluconeogenesis. The chain is Fructose-1,6-bisphosphatase class 1 from Wigglesworthia glossinidia brevipalpis.